Consider the following 431-residue polypeptide: MRTQGQQISDRLTVEVDCHSLGPADCPSMTSSFSPLESPTPTPTSLYSHGSLTSPSWHEAGHYHSLPMERRPSGTPLRNAFRVTDFPSADPMGMQVGTMERPDQLPVSSEYLSGYDDINDQLWIPHDSIPKTFEHPTFPYQAPMPQYHHTMGRNHYYRPQAHTAYLPESASNPCLSRPMFSRHDGLSHSASMSNMLPWMTAPESLAPQTITPQQAFPGAGPVTPPSSNYSDFPASLQTFKPHTPSTPVRSLSLGTPRSDTPQSRMSGHYDYSEEYPVSPVYRDGHLIRTHRQPSRKPSKKQLVRSNLSLEKLPPIIKQVQFKCKEPGCKGRFKRQEHLKRHMKSHSKEKPHVCWVPGCHRAFSRSDNLNAHYTKTHSKRGGRNRYVATLDETSPDYDPEFRGQLTPDGRPIYGSKLEDLADCDLSVDGWED.

Disordered regions lie at residues 29–51 (MTSSFSPLESPTPTPTSLYSHGS), 211–275 (TPQQ…SEEY), and 287–306 (IRTHRQPSRKPSKKQLVRSN). Residues 30 to 48 (TSSFSPLESPTPTPTSLYS) are compositionally biased toward low complexity. Positions 225-265 (PSSNYSDFPASLQTFKPHTPSTPVRSLSLGTPRSDTPQSRM) are enriched in polar residues. Residues 287 to 302 (IRTHRQPSRKPSKKQL) show a composition bias toward basic residues. 2 consecutive C2H2-type zinc fingers follow at residues 321 to 345 (FKCKEPGCKGRFKRQEHLKRHMKSH) and 351 to 376 (HVCWVPGCHRAFSRSDNLNAHYTKTH). The interval 390–412 (DETSPDYDPEFRGQLTPDGRPIY) is disordered.

It localises to the nucleus. Its function is as follows. BrlA, abaA and wetA are pivotal regulators of conidiophore development and conidium maturation. They act individually and together to regulate their own expression and that of numerous other sporulation-specific genes. Binds promoters of target genes at brlA response elements (BREs) containing the conserved sequence 5'-(C/A)(A/G)AGGG(G/A)-3'. Regulates the expression levels of seven secondary metabolism gene clusters including a down-regulated cluster putatively involved in the biosynthesis of the mycotoxins roquefortine C and meleagrin. Negatively regulates the expression of cellulase genes. The polypeptide is C2H2 type master regulator of conidiophore development brlA (Penicillium oxalicum (strain 114-2 / CGMCC 5302) (Penicillium decumbens)).